We begin with the raw amino-acid sequence, 535 residues long: Cytochrome P450 71C3 (535 aa).

A helical transmembrane segment spans residues 23–43; it reads QTLTLLLIAVPTVLLLLASLA. Cys-475 is a heme binding site.

Belongs to the cytochrome P450 family. Heme is required as a cofactor.

The protein resides in the membrane. It functions in the pathway secondary metabolite biosynthesis; 2,4-dihydroxy-1,4-benzoxazin-3-one biosynthesis; 2,4-dihydroxy-1,4-benzoxazin-3-one from indoleglycerol phosphate: step 5/5. Its function is as follows. Catalyzes the conversion of 2-hydroxy-1,4-benzoxazin-3-one (HBOA) to 2,4-dihydroxy-1,4-benzoxazin-3-one (DIBOA). This Zea mays (Maize) protein is Cytochrome P450 71C3 (CYP71C3).